Reading from the N-terminus, the 356-residue chain is 5-formaminoimidazole-4-carboxamide-1-(beta)-D-ribofuranosyl 5'-monophosphate synthetase (356 aa).

Residues His-27 and Ser-94 each contribute to the 5-amino-1-(5-phospho-beta-D-ribosyl)imidazole-4-carboxamide site. Positions 101–333 (TENFADMAVP…YADLMEENLS (233 aa)) constitute an ATP-grasp domain. Residues 145–196 (PHDI…TRYY) and Glu-226 each bind ATP. Residue Asn-255 participates in 5-amino-1-(5-phospho-beta-D-ribosyl)imidazole-4-carboxamide binding. Mg(2+)-binding residues include Glu-293 and Glu-306.

It belongs to the phosphohexose mutase family. Mg(2+) serves as cofactor. It depends on Mn(2+) as a cofactor.

It catalyses the reaction 5-amino-1-(5-phospho-beta-D-ribosyl)imidazole-4-carboxamide + formate + ATP = 5-formamido-1-(5-phospho-D-ribosyl)imidazole-4-carboxamide + ADP + phosphate. The protein operates within purine metabolism; IMP biosynthesis via de novo pathway; 5-formamido-1-(5-phospho-D-ribosyl)imidazole-4-carboxamide from 5-amino-1-(5-phospho-D-ribosyl)imidazole-4-carboxamide (formate route): step 1/1. In terms of biological role, catalyzes the ATP- and formate-dependent formylation of 5-aminoimidazole-4-carboxamide-1-beta-d-ribofuranosyl 5'-monophosphate (AICAR) to 5-formaminoimidazole-4-carboxamide-1-beta-d-ribofuranosyl 5'-monophosphate (FAICAR) in the absence of folates. In Methanosarcina barkeri (strain Fusaro / DSM 804), this protein is 5-formaminoimidazole-4-carboxamide-1-(beta)-D-ribofuranosyl 5'-monophosphate synthetase.